A 266-amino-acid chain; its full sequence is Ribosomal RNA small subunit methyltransferase A (266 aa).

Residues Asn-13, Leu-15, Gly-40, Glu-61, Asp-86, and Asn-110 each coordinate S-adenosyl-L-methionine.

It belongs to the class I-like SAM-binding methyltransferase superfamily. rRNA adenine N(6)-methyltransferase family. RsmA subfamily.

It localises to the cytoplasm. The catalysed reaction is adenosine(1518)/adenosine(1519) in 16S rRNA + 4 S-adenosyl-L-methionine = N(6)-dimethyladenosine(1518)/N(6)-dimethyladenosine(1519) in 16S rRNA + 4 S-adenosyl-L-homocysteine + 4 H(+). Specifically dimethylates two adjacent adenosines (A1518 and A1519) in the loop of a conserved hairpin near the 3'-end of 16S rRNA in the 30S particle. May play a critical role in biogenesis of 30S subunits. The sequence is that of Ribosomal RNA small subunit methyltransferase A from Hydrogenovibrio crunogenus (strain DSM 25203 / XCL-2) (Thiomicrospira crunogena).